We begin with the raw amino-acid sequence, 364 residues long: DNA replication and repair protein RecF (364 aa).

ATP is bound at residue 30-37 (GNNGQGKT).

This sequence belongs to the RecF family.

The protein localises to the cytoplasm. Functionally, the RecF protein is involved in DNA metabolism; it is required for DNA replication and normal SOS inducibility. RecF binds preferentially to single-stranded, linear DNA. It also seems to bind ATP. The chain is DNA replication and repair protein RecF from Geotalea daltonii (strain DSM 22248 / JCM 15807 / FRC-32) (Geobacter daltonii).